The chain runs to 365 residues: tRNA N6-adenosine threonylcarbamoyltransferase (365 aa).

Residues H119 and H123 each coordinate Fe cation. Substrate contacts are provided by residues 141–145 (LVSGG), D174, G187, and N288. Residue D316 coordinates Fe cation.

It belongs to the KAE1 / TsaD family. Requires Fe(2+) as cofactor.

The protein resides in the cytoplasm. The enzyme catalyses L-threonylcarbamoyladenylate + adenosine(37) in tRNA = N(6)-L-threonylcarbamoyladenosine(37) in tRNA + AMP + H(+). Required for the formation of a threonylcarbamoyl group on adenosine at position 37 (t(6)A37) in tRNAs that read codons beginning with adenine. Is involved in the transfer of the threonylcarbamoyl moiety of threonylcarbamoyl-AMP (TC-AMP) to the N6 group of A37, together with TsaE and TsaB. TsaD likely plays a direct catalytic role in this reaction. This chain is tRNA N6-adenosine threonylcarbamoyltransferase, found in Rhizobium leguminosarum bv. trifolii (strain WSM2304).